The following is a 555-amino-acid chain: Inositol 1,4,5-triphosphate receptor associated 2 (555 aa).

At 1-495 (MESTPFSGVA…LKSSIRKANK (495 aa)) the chain is on the cytoplasmic side. 2 disordered regions span residues 84 to 103 (SLPL…SSDP) and 128 to 147 (RSAS…DNIA). Position 91 is a phosphothreonine (T91). Positions 91–102 (TSSTDGTITSSD) are enriched in low complexity. The span at 129 to 142 (SASPTIEAQGTSPA) shows a compositional bias: polar residues. Positions 227 to 341 (TLEKRVKLEE…LEELKQVLLQ (115 aa)) form a coiled coil. Phosphoserine is present on residues S363, S370, and S424. Positions 437 to 469 (ELKTKDDSEPSGEETVERTRKPSLSEKKNNPSK) are disordered. The segment covering 451–465 (TVERTRKPSLSEKKN) has biased composition (basic and acidic residues). A helical; Anchor for type IV membrane protein transmembrane segment spans residues 496–516 (ALWLSIAFIVLFAALMSFLTG). Over 517–555 (QLFQKSVDAAPTQQEDSWTSLEHILWPFTRLRHNGPPPV) the chain is Lumenal.

The protein belongs to the IRAG2 family. Interacts (via coiled-coil domain) with ITPR3. Interacts with SUN1 and SUN2. Interacts with microtubules. Interacts with HCN4; regulates HCN4 channel activity. The removal of the C-terminal lumenal domain occurs by proteolytic processing. As to expression, expressed at high levels in pre B-cells, mature B-cells and pre T-cells. Expressed at low levels in mature T-cells and plasma B-cells. Expressed in germinal center B-cells, splenic marginal zone cells and B-cell lymphomas. Expressed in neuronal cells in the cerebral cortex, epithelial cells in tonsil, adrenal glands, zymogen-producing cells in the stomach and epithelial cells in seminal vesicles.

Its subcellular location is the cytoplasm. It is found in the endoplasmic reticulum membrane. It localises to the nucleus envelope. The protein resides in the cytoskeleton. The protein localises to the microtubule organizing center. Its subcellular location is the centrosome. It is found in the spindle pole. It localises to the chromosome. Plays a role in the delivery of peptides to major histocompatibility complex (MHC) class I molecules; this occurs in a transporter associated with antigen processing (TAP)-independent manner. May play a role in taste signal transduction via ITPR3. May play a role during fertilization in pronucleus congression and fusion. Plays a role in maintaining nuclear shape, maybe as a component of the LINC complex and through interaction with microtubules. Plays a role in the regulation of cellular excitability by regulating the hyperpolarization-activated cyclic nucleotide-gated HCN4 channel activity. The chain is Inositol 1,4,5-triphosphate receptor associated 2 from Homo sapiens (Human).